Consider the following 326-residue polypeptide: Ficolin-1 (326 aa).

The signal sequence occupies residues 1–29; the sequence is MELSGATMARGLAVLLVLFLHIKNLPAQA. Residues 55-93 form the Collagen-like domain; that stretch reads GLPGAPGPKGEAGVIGERGERGLPGAPGKAGPVGPKGDR. Positions 72-111 are disordered; it reads RGERGLPGAPGKAGPVGPKGDRGEKGMRGEKGDAGQSQSC. The segment covering 77 to 89 has biased composition (low complexity); sequence LPGAPGKAGPVGP. Basic and acidic residues predominate over residues 90–104; that stretch reads KGDRGEKGMRGEKGD. The region spanning 109–326 is the Fibrinogen C-terminal domain; that stretch reads QSCATGPRNC…KVSEMKVRPA (218 aa). 2 disulfides stabilise this stretch: Cys-111/Cys-139 and Cys-118/Cys-146. Residues 115–154 are a domain; contributes to trimerization; sequence PRNCKDLLDRGYFLSGWHTIYLPDCRPLTVLCDMDTDGGG. The tract at residues 155 to 243 is b domain; contributes to trimerization; it reads WTVFQRRMDG…LVLGAFVGGS (89 aa). Ca(2+) is bound by residues Asp-262, Asp-264, Ser-266, and Ser-268. The cysteines at positions 270 and 283 are disulfide-linked. A carbohydrate is bound at residue 282–284; the sequence is DCH. N-linked (GlcNAc...) asparagine glycosylation is present at Asn-305. Residues 317 to 326 are p domain; sequence KVSEMKVRPA.

This sequence belongs to the ficolin lectin family. As to quaternary structure, homotrimer. Interacts with elastin/ELN. Interacts (via Fibrinogen C-terminal domain) with FFAR2. Interacts with CRP; may regulate monocyte activation by FCN1. In terms of tissue distribution, peripheral blood leukocytes, monocytes and granulocytes. Also detected in spleen, lung, and thymus, may be due to the presence of tissue macrophages or trapped blood in these tissues. Not detected on lymphocytes.

It localises to the secreted. The protein localises to the cell membrane. Its function is as follows. Extracellular lectin functioning as a pattern-recognition receptor in innate immunity. Binds the sugar moieties of pathogen-associated molecular patterns (PAMPs) displayed on microbes and activates the lectin pathway of the complement system. May also activate monocytes through a G protein-coupled receptor, FFAR2, inducing the secretion of interleukin-8/IL-8. Binds preferentially to 9-O-acetylated 2-6-linked sialic acid derivatives and to various glycans containing sialic acid engaged in a 2-3 linkage. The polypeptide is Ficolin-1 (FCN1) (Homo sapiens (Human)).